Consider the following 291-residue polypeptide: MSVLTTRAPAKINLTLHILGRRPGDGYHALESLVAFADVADTLELVPGPDLTLDISGPTAGPAGPLDDNLVLRAARHLAAGVDGLRLGAFRLHKQLPVAAGIGGGSSDAAAALRLLAELNGLALDHPAVIAAARATGADVPVCLDPRARMMRGAGEEIGPVLGLASLPAVLVNPGVPVSTAPVFKALGLAVGQRLDGAELPVVGASLNADAVLAVITPARNDLEAPALTVAPVIGEALALLRAQAGCRLARMSGSGATVFAIFSDDGAAETAAAAIRTAEPGWWVEPTRLA.

Lys-11 is an active-site residue. Position 97 to 107 (97 to 107) interacts with ATP; that stretch reads PVAAGIGGGSS. Asp-139 is a catalytic residue.

The protein belongs to the GHMP kinase family. IspE subfamily.

The enzyme catalyses 4-CDP-2-C-methyl-D-erythritol + ATP = 4-CDP-2-C-methyl-D-erythritol 2-phosphate + ADP + H(+). The protein operates within isoprenoid biosynthesis; isopentenyl diphosphate biosynthesis via DXP pathway; isopentenyl diphosphate from 1-deoxy-D-xylulose 5-phosphate: step 3/6. Its function is as follows. Catalyzes the phosphorylation of the position 2 hydroxy group of 4-diphosphocytidyl-2C-methyl-D-erythritol. This chain is 4-diphosphocytidyl-2-C-methyl-D-erythritol kinase, found in Methylorubrum extorquens (strain CM4 / NCIMB 13688) (Methylobacterium extorquens).